The following is a 370-amino-acid chain: uncharacterized protein (370 aa).

This is an uncharacterized protein from Caenorhabditis elegans.